A 728-amino-acid polypeptide reads, in one-letter code: Catalase-peroxidase 1 (728 aa).

A cross-link (tryptophyl-tyrosyl-methioninium (Trp-Tyr) (with M-244)) is located at residues 91 to 218 (WHSAGTYRTA…LAAVQMGLIY (128 aa)). Residue histidine 92 is the Proton acceptor of the active site. The tryptophyl-tyrosyl-methioninium (Tyr-Met) (with W-91) cross-link spans 218–244 (YVNPEGPDGNPDPVAAAHDIRETFARM). Histidine 259 is a heme b binding site.

This sequence belongs to the peroxidase family. Peroxidase/catalase subfamily. In terms of assembly, homodimer or homotetramer. It depends on heme b as a cofactor. Formation of the three residue Trp-Tyr-Met cross-link is important for the catalase, but not the peroxidase activity of the enzyme.

It carries out the reaction H2O2 + AH2 = A + 2 H2O. The catalysed reaction is 2 H2O2 = O2 + 2 H2O. Bifunctional enzyme with both catalase and broad-spectrum peroxidase activity. This is Catalase-peroxidase 1 from Burkholderia cenocepacia (strain ATCC BAA-245 / DSM 16553 / LMG 16656 / NCTC 13227 / J2315 / CF5610) (Burkholderia cepacia (strain J2315)).